The following is a 99-amino-acid chain: Ubiquitin-related modifier 1 homolog (99 aa).

A 1-thioglycine modification is found at Gly99. Gly99 is covalently cross-linked (Glycyl lysine isopeptide (Gly-Lys) (interchain with K-? in acceptor proteins)).

Belongs to the URM1 family. Interacts with cer. Post-translationally, C-terminal thiocarboxylation occurs in 2 steps, it is first acyl-adenylated (-COAMP) via the hesA/moeB/thiF part of the MOCS3 homolog, then thiocarboxylated (-COSH) via the rhodanese domain of the MOCS3 homolog.

Its subcellular location is the cytoplasm. Its pathway is tRNA modification; 5-methoxycarbonylmethyl-2-thiouridine-tRNA biosynthesis. In terms of biological role, acts as a sulfur carrier required for 2-thiolation of mcm(5)S(2)U at tRNA wobble positions of cytosolic tRNA(Lys), tRNA(Glu) and tRNA(Gln). Serves as sulfur donor in tRNA 2-thiolation reaction by being thiocarboxylated (-COSH) at its C-terminus by MOCS3. The sulfur is then transferred to tRNA to form 2-thiolation of mcm(5)S(2)U. Also acts as a ubiquitin-like protein (UBL) that is covalently conjugated via an isopeptide bond to lysine residues of target proteins such as Prx2/Jafrac1, Ciao1, Eip71CD and GILT1. The thiocarboxylated form serves as substrate for conjugation and oxidative stress specifically induces the formation of UBL-protein conjugates. The protein is Ubiquitin-related modifier 1 homolog of Drosophila virilis (Fruit fly).